The sequence spans 368 residues: Glutamate 5-kinase (368 aa).

Residue Lys-13 participates in ATP binding. Residues Ser-54, Asp-141, and Asn-153 each contribute to the substrate site. 173–174 (SD) lines the ATP pocket. Positions 278–355 (RGVITVDEGA…DEIEAILGYA (78 aa)) constitute a PUA domain.

Belongs to the glutamate 5-kinase family.

Its subcellular location is the cytoplasm. The catalysed reaction is L-glutamate + ATP = L-glutamyl 5-phosphate + ADP. It functions in the pathway amino-acid biosynthesis; L-proline biosynthesis; L-glutamate 5-semialdehyde from L-glutamate: step 1/2. Catalyzes the transfer of a phosphate group to glutamate to form L-glutamate 5-phosphate. This Ruegeria sp. (strain TM1040) (Silicibacter sp.) protein is Glutamate 5-kinase.